A 205-amino-acid chain; its full sequence is Guanylate kinase (205 aa).

The 179-residue stretch at 17-195 folds into the Guanylate kinase-like domain; it reads SRLLVLSGPS…AVEAVERLLF (179 aa). 24 to 31 serves as a coordination point for ATP; it reads GPSGVGKD.

Belongs to the guanylate kinase family.

The protein localises to the cytoplasm. It catalyses the reaction GMP + ATP = GDP + ADP. In terms of biological role, essential for recycling GMP and indirectly, cGMP. This chain is Guanylate kinase, found in Gloeobacter violaceus (strain ATCC 29082 / PCC 7421).